Consider the following 515-residue polypeptide: MQLNPAEISDLIKAKIENLSVNAEVSTRGTVISVTDGIVRIHGLSDAMQGEMLEFPGNTLGLAMNLERDSVGAVVLGEYEHIKEGDTVTCTGRILEVPVGRELVGRVVDALGRPIDGKGPINTTLTAPVEKIAPGVIARKSVDQPMQTGLKAIDSMIPVGRGQRELIIGDRQTGKTAVALDAIVNQKGTGVICIYVAIGQKASSIANVVRKLEEHGAMEHTIVVAATASEAAALQYIAPYSGCTMGEFFRDRGEDALIVYDDLSKQAVAYRQISLLLRRPPGREAYPGDVFYLHSRLLERAARVNEHEVEKLTNGEVKGKTGSLTALPIIETQAGDVSAFVPTNVISITDGQIFLETDLFNAGIRPAINAGISVSRVGGAAQTKVIKKLGGGIRLALAQYRELAAFSQFASDLDEATRKQLEHGEVVTELMKQKQFSTLNTAEMALTLWAINNGSYSDVPVAKALAFESEFLSFVRTQHPEVLEAVNASGAMSDESEKTLEAAMKSFKSSYAYQA.

169-176 (GDRQTGKT) contributes to the ATP binding site.

The protein belongs to the ATPase alpha/beta chains family. In terms of assembly, F-type ATPases have 2 components, CF(1) - the catalytic core - and CF(0) - the membrane proton channel. CF(1) has five subunits: alpha(3), beta(3), gamma(1), delta(1), epsilon(1). CF(0) has three main subunits: a(1), b(2) and c(9-12). The alpha and beta chains form an alternating ring which encloses part of the gamma chain. CF(1) is attached to CF(0) by a central stalk formed by the gamma and epsilon chains, while a peripheral stalk is formed by the delta and b chains.

Its subcellular location is the cell inner membrane. It carries out the reaction ATP + H2O + 4 H(+)(in) = ADP + phosphate + 5 H(+)(out). Its function is as follows. Produces ATP from ADP in the presence of a proton gradient across the membrane. The alpha chain is a regulatory subunit. This Neisseria gonorrhoeae (strain ATCC 700825 / FA 1090) protein is ATP synthase subunit alpha.